Consider the following 863-residue polypeptide: Alanine--tRNA ligase (863 aa).

Zn(2+)-binding residues include H552, H556, C654, and H658.

The protein belongs to the class-II aminoacyl-tRNA synthetase family. Requires Zn(2+) as cofactor.

It is found in the cytoplasm. The catalysed reaction is tRNA(Ala) + L-alanine + ATP = L-alanyl-tRNA(Ala) + AMP + diphosphate. Its function is as follows. Catalyzes the attachment of alanine to tRNA(Ala) in a two-step reaction: alanine is first activated by ATP to form Ala-AMP and then transferred to the acceptor end of tRNA(Ala). Also edits incorrectly charged Ser-tRNA(Ala) and Gly-tRNA(Ala) via its editing domain. The protein is Alanine--tRNA ligase of Halorhodospira halophila (strain DSM 244 / SL1) (Ectothiorhodospira halophila (strain DSM 244 / SL1)).